The primary structure comprises 441 residues: Fibroleukin (441 aa).

The signal sequence occupies residues 1-15; it reads MKLANWCWLSSTVLA. The N-linked (GlcNAc...) asparagine glycan is linked to N25. Residues 73 to 167 are a coiled coil; that stretch reads SRIEEVFKEV…LEKLNLVNMN (95 aa). The disordered stretch occupies residues 102–128; that stretch reads QADDSRDPGRNGLLLPGTGAPGETGDN. N179, N237, N265, and N338 each carry an N-linked (GlcNAc...) asparagine glycan. The region spanning 206 to 438 is the Fibrinogen C-terminal domain; the sequence is VQQHLIYKDC…EVKMMIRPKH (233 aa).

In terms of assembly, homotetramer; disulfide-linked.

It is found in the secreted. In terms of biological role, may play a role in physiologic lymphocyte functions at mucosal sites. This Bos taurus (Bovine) protein is Fibroleukin (FGL2).